Consider the following 216-residue polypeptide: MTQQPKIPRATAKRLPIYFRYLTFLHDAGTDRISSAELSDAIKFDAATIRRDFSYFGALGKRGYGYDVKALLDFFANVLDQDSLINVALIGAGNLGQALLNFNFHQSSNMRISAAFDVDETRAGTIMAGVPIYAMSELTEQITAQRINIAILTVPQGVAQEITDKLVEAGIKGILNFTPLRVTVPNNVRVQNVDLTNELQTLVYFIDNYGSITTGL.

The H-T-H motif DNA-binding region spans 17-56 (IYFRYLTFLHDAGTDRISSAELSDAIKFDAATIRRDFSYF). 91–96 (GAGNLG) is a binding site for NAD(+).

The protein belongs to the transcriptional regulatory Rex family. Homodimer.

The protein localises to the cytoplasm. Modulates transcription in response to changes in cellular NADH/NAD(+) redox state. The chain is Redox-sensing transcriptional repressor Rex from Leuconostoc citreum (strain KM20).